The following is a 165-amino-acid chain: Large ribosomal subunit protein uL15 (165 aa).

The tract at residues M1–N44 is disordered. Residues R21–G37 are compositionally biased toward gly residues.

This sequence belongs to the universal ribosomal protein uL15 family. As to quaternary structure, part of the 50S ribosomal subunit.

Its function is as follows. Binds to the 23S rRNA. The polypeptide is Large ribosomal subunit protein uL15 (Anaeromyxobacter dehalogenans (strain 2CP-1 / ATCC BAA-258)).